Here is a 488-residue protein sequence, read N- to C-terminus: Cobyric acid synthase (488 aa).

The region spanning 252 to 440 (VPLIAVLRFP…VHGLFANDRQ (189 aa)) is the GATase cobBQ-type domain. Cys334 functions as the Nucleophile in the catalytic mechanism. His432 is an active-site residue.

This sequence belongs to the CobB/CobQ family. CobQ subfamily.

Its pathway is cofactor biosynthesis; adenosylcobalamin biosynthesis. Catalyzes amidations at positions B, D, E, and G on adenosylcobyrinic A,C-diamide. NH(2) groups are provided by glutamine, and one molecule of ATP is hydrogenolyzed for each amidation. In Methylorubrum populi (strain ATCC BAA-705 / NCIMB 13946 / BJ001) (Methylobacterium populi), this protein is Cobyric acid synthase.